Here is a 435-residue protein sequence, read N- to C-terminus: Serine--tRNA ligase (435 aa).

A disordered region spans residues Q41–A70. Polar residues predominate over residues A49–I58. T242–E244 serves as a coordination point for L-serine. ATP is bound at residue R273–E275. E296 lines the L-serine pocket. Residue E360–S363 coordinates ATP. S396 is an L-serine binding site.

This sequence belongs to the class-II aminoacyl-tRNA synthetase family. Type-1 seryl-tRNA synthetase subfamily. In terms of assembly, homodimer. The tRNA molecule binds across the dimer.

The protein resides in the cytoplasm. The catalysed reaction is tRNA(Ser) + L-serine + ATP = L-seryl-tRNA(Ser) + AMP + diphosphate + H(+). The enzyme catalyses tRNA(Sec) + L-serine + ATP = L-seryl-tRNA(Sec) + AMP + diphosphate + H(+). The protein operates within aminoacyl-tRNA biosynthesis; selenocysteinyl-tRNA(Sec) biosynthesis; L-seryl-tRNA(Sec) from L-serine and tRNA(Sec): step 1/1. Catalyzes the attachment of serine to tRNA(Ser). Is also able to aminoacylate tRNA(Sec) with serine, to form the misacylated tRNA L-seryl-tRNA(Sec), which will be further converted into selenocysteinyl-tRNA(Sec). This chain is Serine--tRNA ligase, found in Aliivibrio fischeri (strain ATCC 700601 / ES114) (Vibrio fischeri).